A 279-amino-acid chain; its full sequence is Tryptophan synthase alpha chain (279 aa).

Active-site proton acceptor residues include E50 and D61.

This sequence belongs to the TrpA family. Tetramer of two alpha and two beta chains.

It carries out the reaction (1S,2R)-1-C-(indol-3-yl)glycerol 3-phosphate + L-serine = D-glyceraldehyde 3-phosphate + L-tryptophan + H2O. It functions in the pathway amino-acid biosynthesis; L-tryptophan biosynthesis; L-tryptophan from chorismate: step 5/5. The alpha subunit is responsible for the aldol cleavage of indoleglycerol phosphate to indole and glyceraldehyde 3-phosphate. The chain is Tryptophan synthase alpha chain from Allorhizobium ampelinum (strain ATCC BAA-846 / DSM 112012 / S4) (Agrobacterium vitis (strain S4)).